A 1174-amino-acid chain; its full sequence is MSSVLSDYTIGGVKIHFPCRAYPAQLAMMNSIVRGLNSSQHCLLESPTGSGKSLALLCSALAWQQSLSEKPVDEGLNKKPEAPPSCSCACHSKNFTYSDTNLDTSPHFNSPSKPSSGRNGVSTPCQDSPEKNTLAAKLSAKKQASIHRDEDDDFQVEKKRIRPLETTQQIRKRHCLEKDVHHVDARLASEKRVKPESPIGKSFSDRKDSFQNVDGLCSRCCCSAKQGNNQEPANTVKKDHGGQCKRPKIYFGTRTHKQIAQITRELRKTAYSGVPMTILSSRDHSCVHPEVVGNFNRKEKCMELLDGKHGKSCYFYHGVHKISNQQTLQHLQGMSRAWDIEELVSLGRKLKACPYYTARELIEDADIVFCPYNYLLDSQIRETMDIKLKGQVVILDEAHNIEDCARESASYSVTEVQLRFARDELDSLINGNIRKKSHEPLRDVCYNLINWLETNSKHLVERGYESSCKIWSGNEMLLNLYRMGITTATFPVLQRHLSAVLQKEEKVTPIHGKEEAIQIPIISASTQVVLKGLFMVLDYLFRENSRFADDYKVAIQQTYSWTNQIAIFDKTGVLAVPKNKKHSRQKIGVNALNFWCLNPAVAFSDINDKVRTIVLTSGTLSPLKSFSSELGVTFSIQLEANHVISNSQVWVGTVGSGPKGRNLCATFQHTETFEFQDEVGMLLLSVCQTVSQGILCFLPSYKLLEKLRERWIFTGLWHSLESVKTVIAEPQGGEKTDFDELLQVYYDAIKFKGEKDGALLIAVCRGKVSEGLDFSDDNARAVITVGIPFPNVKDLQVELKRQYNDHHSKSRGLLPGRQWYEIQAYRALNQALGRCIRHKNDWGALILVDDRFNNNPNRYISGLSKWVRQQIQHHSSFASALESLTEFSRRHQKVTNRSKKDEKCTKDNEPTLEVACLEDSTFTSVSESSHQSPENSTEEAEVCVQELQCPQVATKSPSVASHGVSRRKKSDPGLRGESLQTMKTEKNEISRSSSPTFGKQTEPVNWPIFNSLRRHFNSKVKNCTPVLKSSKNRAPGSSTFNKTALPLTGNCVPSNETADTSLGPCLQSEVIISPVKIEATPATNYSKQVFCCEKDLLPDTELSPGTEEAKCPSSNKAAETEVDDDSECFTPELFDPVDTNEENGELVETDRSSHSSDCFSAEELFETATGFGQK.

The 435-residue stretch at 11-445 (GGVKIHFPCR…KSHEPLRDVC (435 aa)) folds into the Helicase ATP-binding domain. Over residues 101–126 (NLDTSPHFNSPSKPSSGRNGVSTPCQ) the composition is skewed to polar residues. Disordered stretches follow at residues 101–160 (NLDT…EKKR) and 187–208 (LASE…DRKD). The span at 134–143 (LAAKLSAKKQ) shows a compositional bias: low complexity. The short motif at 158–175 (KKRIRPLETTQQIRKRHC) is the Nuclear localization signal element. 185–192 (ARLASEKR) provides a ligand contact to ATP. The [4Fe-4S] cluster site is built by cysteine 286, cysteine 301, cysteine 313, and cysteine 353. Positions 393–396 (VILD) match the DEAH box motif. Positions 888–1063 (SRRHQKVTNR…SNETADTSLG (176 aa)) are interaction with BRCA1. Composition is skewed to polar residues over residues 923–935 (TSVS…SPEN) and 990–1001 (SRSSSPTFGKQT). 2 disordered regions span residues 923–1001 (TSVS…GKQT) and 1102–1155 (LSPG…SSHS). Serine 929, serine 932, and serine 994 each carry phosphoserine. Acidic residues predominate over residues 1138–1147 (DTNEENGELV). N6-acetyllysine is present on lysine 1174.

Belongs to the DEAD box helicase family. DEAH subfamily. Binds directly to the BRCT domains of BRCA1. Interacts with the CIA complex components CIAO1, CIAO2B and MMS19. It depends on [4Fe-4S] cluster as a cofactor. Phosphorylated. Phosphorylation is necessary for interaction with BRCA1, and is cell-cycle regulated.

The protein localises to the nucleus. Its subcellular location is the cytoplasm. It catalyses the reaction Couples ATP hydrolysis with the unwinding of duplex DNA at the replication fork by translocating in the 5'-3' direction. This creates two antiparallel DNA single strands (ssDNA). The leading ssDNA polymer is the template for DNA polymerase III holoenzyme which synthesizes a continuous strand.. The enzyme catalyses ATP + H2O = ADP + phosphate + H(+). DNA-dependent helicase and 5' to 3' DNA helicase required for the maintenance of chromosomal stability. Acts late in the Fanconi anemia pathway, after FANCD2 ubiquitination. Involved in the repair of DNA double-strand breaks by homologous recombination in a manner that depends on its association with BRCA1. Involved in the repair of abasic sites at replication forks by promoting the degradation of DNA-protein cross-links: acts by catalyzing unfolding of HMCES DNA-protein cross-link via its helicase activity, exposing the underlying DNA and enabling cleavage of the DNA-protein adduct by the SPRTN metalloprotease. Can unwind RNA:DNA hybrids and G-quadruplex DNA. The protein is Fanconi anemia group J protein homolog of Mus musculus (Mouse).